The sequence spans 416 residues: WD repeat-containing protein JIP5 (416 aa).

WD repeat units follow at residues 9 to 48 (PLSS…ENGK), 62 to 101 (RHKG…VEWK), and 112 to 151 (GFQV…TEVS). Positions 149-183 (EVSARPQQTHHPHDDYVSSLTPLPPSETSTSGYSK) are disordered. The span at 166 to 179 (SSLTPLPPSETSTS) shows a compositional bias: low complexity. WD repeat units follow at residues 214-255 (ISSS…DQDE), 264-308 (DGGE…ISEL), and 309-348 (SHDD…EEGN). Acidic residues-rich tracts occupy residues 343 to 359 (SDEE…DIEN) and 374 to 383 (SDEEEDSDDD). The tract at residues 343-416 (SDEEGNDDES…VHVMAFKGLD (74 aa)) is disordered. Positions 389-400 (KGKRKKRKRGKG) are enriched in basic residues.

It belongs to the WD repeat WDR55 family.

It is found in the nucleus. The protein resides in the nucleolus. The protein is WD repeat-containing protein JIP5 (JIP5) of Coccidioides immitis (strain RS) (Valley fever fungus).